Consider the following 594-residue polypeptide: UvrABC system protein C (594 aa).

Residues 14–91 (DQPGCYLMKD…IKKYDPKYNI (78 aa)) form the GIY-YIG domain. The UVR domain maps to 196 to 231 (KEIRSELETKMYEASEKLEFERAKELRDQIAHIDAI).

The protein belongs to the UvrC family. In terms of assembly, interacts with UvrB in an incision complex.

The protein resides in the cytoplasm. In terms of biological role, the UvrABC repair system catalyzes the recognition and processing of DNA lesions. UvrC both incises the 5' and 3' sides of the lesion. The N-terminal half is responsible for the 3' incision and the C-terminal half is responsible for the 5' incision. This chain is UvrABC system protein C, found in Bacillus mycoides (strain KBAB4) (Bacillus weihenstephanensis).